The primary structure comprises 190 residues: Ohanin (190 aa).

Residues 1–20 form the signal peptide; that stretch reads MLLFTLCFFADQENGGKALA. The 107-residue stretch at 21-127 folds into the B30.2/SPRY domain; that stretch reads SPPGNWQKAD…RIWQKGLWWL (107 aa). Residues 128-190 constitute a propeptide that is removed on maturation; that stretch reads RRLETDSDKL…IGARVSLANL (63 aa).

As to expression, expressed by the venom gland.

It localises to the secreted. Its function is as follows. Neurotoxin that produces dose-dependent hypolocomotion and hyperalgesia in mice. May directly act on the central nervous system, as it is 6500-fold more potent when administered intracerebroventricularly than intraperitoneal. In Ophiophagus hannah (King cobra), this protein is Ohanin.